The sequence spans 405 residues: Probable dual-specificity RNA methyltransferase RlmN (405 aa).

Over residues 1–15 (MSSTGSSVSTSGLVL) the composition is skewed to low complexity. The tract at residues 1-34 (MSSTGSSVSTSGLVLPSTPLAEPGKEVPLVVNTP) is disordered. E130 functions as the Proton acceptor in the catalytic mechanism. Positions 142-386 (SAARATLCLS…VTVRDTRGSE (245 aa)) constitute a Radical SAM core domain. A disulfide bridge connects residues C149 and C391. C156, C160, and C163 together coordinate [4Fe-4S] cluster. S-adenosyl-L-methionine contacts are provided by residues 211-212 (GE), S245, 268-270 (SLH), and N348. C391 functions as the S-methylcysteine intermediate in the catalytic mechanism.

Belongs to the radical SAM superfamily. RlmN family. Requires [4Fe-4S] cluster as cofactor.

The protein resides in the cytoplasm. The catalysed reaction is adenosine(2503) in 23S rRNA + 2 reduced [2Fe-2S]-[ferredoxin] + 2 S-adenosyl-L-methionine = 2-methyladenosine(2503) in 23S rRNA + 5'-deoxyadenosine + L-methionine + 2 oxidized [2Fe-2S]-[ferredoxin] + S-adenosyl-L-homocysteine. It catalyses the reaction adenosine(37) in tRNA + 2 reduced [2Fe-2S]-[ferredoxin] + 2 S-adenosyl-L-methionine = 2-methyladenosine(37) in tRNA + 5'-deoxyadenosine + L-methionine + 2 oxidized [2Fe-2S]-[ferredoxin] + S-adenosyl-L-homocysteine. Specifically methylates position 2 of adenine 2503 in 23S rRNA and position 2 of adenine 37 in tRNAs. In Cutibacterium acnes (strain DSM 16379 / KPA171202) (Propionibacterium acnes), this protein is Probable dual-specificity RNA methyltransferase RlmN.